A 197-amino-acid polypeptide reads, in one-letter code: Holliday junction branch migration complex subunit RuvA (197 aa).

Residues 1 to 63 (MINKIHGKVI…ENELKLFGFL (63 aa)) form a domain I region. Residues 64-139 (NSDEREIFKE…KLLINSELES (76 aa)) are domain II. Residue Ser139 is a region of interest, flexible linker. A domain III region spans residues 140-197 (TGLFRFKELEESIVSMGFDRKIVNSKIREAFNLAEFANLKDSEKEQFLFKEVLKRISN).

This sequence belongs to the RuvA family. Homotetramer. Forms an RuvA(8)-RuvB(12)-Holliday junction (HJ) complex. HJ DNA is sandwiched between 2 RuvA tetramers; dsDNA enters through RuvA and exits via RuvB. An RuvB hexamer assembles on each DNA strand where it exits the tetramer. Each RuvB hexamer is contacted by two RuvA subunits (via domain III) on 2 adjacent RuvB subunits; this complex drives branch migration. In the full resolvosome a probable DNA-RuvA(4)-RuvB(12)-RuvC(2) complex forms which resolves the HJ.

It is found in the cytoplasm. Functionally, the RuvA-RuvB-RuvC complex processes Holliday junction (HJ) DNA during genetic recombination and DNA repair, while the RuvA-RuvB complex plays an important role in the rescue of blocked DNA replication forks via replication fork reversal (RFR). RuvA specifically binds to HJ cruciform DNA, conferring on it an open structure. The RuvB hexamer acts as an ATP-dependent pump, pulling dsDNA into and through the RuvAB complex. HJ branch migration allows RuvC to scan DNA until it finds its consensus sequence, where it cleaves and resolves the cruciform DNA. The polypeptide is Holliday junction branch migration complex subunit RuvA (Borreliella burgdorferi (strain ATCC 35210 / DSM 4680 / CIP 102532 / B31) (Borrelia burgdorferi)).